The primary structure comprises 398 residues: Palmitoyl-[acyl-carrier-protein] 4-desaturase 3, chloroplastic (398 aa).

The transit peptide at M1–R29 directs the protein to the chloroplast. The Fe cation site is built by E139, E177, H180, E230, E263, and H266.

This sequence belongs to the fatty acid desaturase type 2 family. As to quaternary structure, homodimer. Requires Fe(2+) as cofactor. As to expression, preferentially expressed in the flower labellum. Low expression in leaves.

The protein localises to the plastid. The protein resides in the chloroplast stroma. It catalyses the reaction hexadecanoyl-[ACP] + 2 reduced [2Fe-2S]-[ferredoxin] + O2 + 2 H(+) = (4Z)-hexadecenoyl-[ACP] + 2 oxidized [2Fe-2S]-[ferredoxin] + 2 H2O. It functions in the pathway lipid metabolism; fatty acid metabolism. Functionally, converts palmitoyl-ACP to (4Z)-hexadec-4-enoyl-ACP by introduction of a cis double bond between carbons 4 and 5 of the acyl chain. The protein is Palmitoyl-[acyl-carrier-protein] 4-desaturase 3, chloroplastic (SAD3) of Ophrys arachnitiformis subsp. archipelagi (Orchid).